The chain runs to 150 residues: Arginine repressor (150 aa).

Belongs to the ArgR family.

Its subcellular location is the cytoplasm. It participates in amino-acid biosynthesis; L-arginine biosynthesis [regulation]. In terms of biological role, regulates arginine biosynthesis genes. This chain is Arginine repressor, found in Clostridium kluyveri (strain NBRC 12016).